The sequence spans 146 residues: 3-hydroxyacyl-[acyl-carrier-protein] dehydratase FabZ (146 aa).

The active site involves histidine 48.

The protein belongs to the thioester dehydratase family. FabZ subfamily.

It is found in the cytoplasm. It carries out the reaction a (3R)-hydroxyacyl-[ACP] = a (2E)-enoyl-[ACP] + H2O. Its function is as follows. Involved in unsaturated fatty acids biosynthesis. Catalyzes the dehydration of short chain beta-hydroxyacyl-ACPs and long chain saturated and unsaturated beta-hydroxyacyl-ACPs. The sequence is that of 3-hydroxyacyl-[acyl-carrier-protein] dehydratase FabZ from Campylobacter lari (strain RM2100 / D67 / ATCC BAA-1060).